Reading from the N-terminus, the 426-residue chain is Serine hydroxymethyltransferase (426 aa).

Residues Leu113 and 117-119 (GHL) each bind (6S)-5,6,7,8-tetrahydrofolate. At Lys222 the chain carries N6-(pyridoxal phosphate)lysine. 363 to 365 (SAF) serves as a coordination point for (6S)-5,6,7,8-tetrahydrofolate.

The protein belongs to the SHMT family. Homodimer. Pyridoxal 5'-phosphate serves as cofactor.

The protein localises to the cytoplasm. The enzyme catalyses (6R)-5,10-methylene-5,6,7,8-tetrahydrofolate + glycine + H2O = (6S)-5,6,7,8-tetrahydrofolate + L-serine. The protein operates within one-carbon metabolism; tetrahydrofolate interconversion. Its pathway is amino-acid biosynthesis; glycine biosynthesis; glycine from L-serine: step 1/1. Its function is as follows. Catalyzes the reversible interconversion of serine and glycine with tetrahydrofolate (THF) serving as the one-carbon carrier. This reaction serves as the major source of one-carbon groups required for the biosynthesis of purines, thymidylate, methionine, and other important biomolecules. Also exhibits THF-independent aldolase activity toward beta-hydroxyamino acids, producing glycine and aldehydes, via a retro-aldol mechanism. This is Serine hydroxymethyltransferase from Bacteroides fragilis (strain ATCC 25285 / DSM 2151 / CCUG 4856 / JCM 11019 / LMG 10263 / NCTC 9343 / Onslow / VPI 2553 / EN-2).